A 466-amino-acid chain; its full sequence is Replicative helicase loading/DNA remodeling protein DnaB (466 aa).

The DDBH1 stretch occupies residues 3–113 (RQAFEFGLRP…ETQFVYQLIQ (111 aa)). The interval 200 to 292 (EMLRQMLGKH…TSSSAGKSSE (93 aa)) is DDBH2-1. A DDBH2-2 region spans residues 293-401 (VNPKPQSDEW…QPKNEGSSGN (109 aa)).

Belongs to the DnaB/DnaD family. Homotetramer, higher-order oligomers are induced by ssDNA. The DNA replisome assembles sequentially on oriC in this order; DnaA, DnaD, DnaB, DnaI-DnaC helicase. Part of the replication restart primosome, PriA binds first, then DnaD and subsequently DnaB bind.

Helps DnaI load the DnaC replicative helicase onto single-stranded (ss)DNA. During DNA replication from the origin of replication (oriC) in the DNA replisome, DnaB and DnaD are required after DnaA and before subsequent helicase DnaC loading. Component of the replication restart primosome, which reloads the replicative helicase on sites other than oriC. Essential for replication initiation of the chromosome and plasmids. Remodels DNA, laterally compacts supercoiled plasmid and linear DNA. Binds supercoiled, nicked and linear double-stranded (ds)DNA and phage phiX174 single-stranded (ss)DNA; phiX174 ssDNA is a better substrate than for B.subtilis. No binding to phage M13 ssDNA although it induces oligomers. The protein is Replicative helicase loading/DNA remodeling protein DnaB of Staphylococcus aureus (strain NCTC 8325 / PS 47).